The sequence spans 337 residues: Inositol 2-dehydrogenase (337 aa).

This sequence belongs to the Gfo/Idh/MocA family. In terms of assembly, homotetramer.

It catalyses the reaction myo-inositol + NAD(+) = scyllo-inosose + NADH + H(+). In terms of biological role, involved in the oxidation of myo-inositol (MI) to 2-keto-myo-inositol (2KMI or 2-inosose). The polypeptide is Inositol 2-dehydrogenase (Arthrobacter sp. (strain FB24)).